A 326-amino-acid polypeptide reads, in one-letter code: Transposase InsH for insertion sequence element IS5A (326 aa).

Belongs to the transposase 11 family.

Its function is as follows. Involved in the transposition of the insertion sequence IS5. This Escherichia coli (strain K12) protein is Transposase InsH for insertion sequence element IS5A (insH1).